We begin with the raw amino-acid sequence, 155 residues long: Urease accessory protein UreE (155 aa).

Belongs to the UreE family.

The protein localises to the cytoplasm. In terms of biological role, involved in urease metallocenter assembly. Binds nickel. Probably functions as a nickel donor during metallocenter assembly. The chain is Urease accessory protein UreE from Synechococcus sp. (strain CC9311).